A 201-amino-acid chain; its full sequence is Ciliary microtubule inner protein 2C (201 aa).

It belongs to the CIMIP2 family. In terms of assembly, microtubule inner protein component of sperm flagellar doublet microtubules.

It localises to the cytoplasm. Its subcellular location is the cytoskeleton. The protein localises to the cilium axoneme. It is found in the flagellum axoneme. Its function is as follows. Microtubule inner protein (MIP) part of the dynein-decorated doublet microtubules (DMTs) in cilia axoneme, which is required for motile cilia beating. Binds to the intra-tubulin interfaces. This is Ciliary microtubule inner protein 2C (CIMIP2C) from Bos taurus (Bovine).